Consider the following 271-residue polypeptide: MAKHLYKTPIPSTRKGTVDRQVKSNPRNKLIHGRHRCGKGRNARGIITARHRGGGHKRLYRKIDFRRNQKDISGRIVTIEYDPNRNAYICLIHYGDGEKRYILHPRGAIIGDTIVSGTKVPISMGNALTDMPLGTAIHNIEITRGRGGQLARAAGAVAKLIAKEGKLATLRLPSGEVRLVSQNCLATVGQVGNVGVNQKSLGRAGSKCWLGKRPVVRGVVMNPVDHPHGGGEGKAPIGRKKPTTPWGYPALGRRTRKRKKYSDSFILRRRK.

Disordered regions lie at residues 1–22 (MAKHLYKTPIPSTRKGTVDRQV) and 223–271 (PVDH…RRRK).

This sequence belongs to the universal ribosomal protein uL2 family. In terms of assembly, part of the 50S ribosomal subunit.

The protein localises to the plastid. Its subcellular location is the chloroplast. This Sorghum bicolor (Sorghum) protein is Large ribosomal subunit protein uL2cz/uL2cy (rpl2-A).